Reading from the N-terminus, the 303-residue chain is Probable cell division protein WhiA (303 aa).

The segment at residues 272 to 303 (SIQQLADSLSRPLTKSGVNHRLRKINKIADEL) is a DNA-binding region (H-T-H motif).

The protein belongs to the WhiA family.

In terms of biological role, involved in cell division and chromosome segregation. This chain is Probable cell division protein WhiA, found in Streptococcus sanguinis (strain SK36).